The chain runs to 210 residues: Thymidylate kinase (210 aa).

10 to 17 (GLEGAGKS) serves as a coordination point for ATP.

This sequence belongs to the thymidylate kinase family.

It carries out the reaction dTMP + ATP = dTDP + ADP. Its function is as follows. Phosphorylation of dTMP to form dTDP in both de novo and salvage pathways of dTTP synthesis. The polypeptide is Thymidylate kinase (Hamiltonella defensa subsp. Acyrthosiphon pisum (strain 5AT)).